The primary structure comprises 397 residues: MSESVHTNTSLWSKGMKAVIVAQFLSAFGDNALLFATLALLKAQFYPEWSQPVLQMVFVGAYILFAPFVGQVADSFAKGRVMMFANGLKLLGAASICFGFNPFVGYTLVGIGAAAYSPAKYGILGELTTGDKLVKANGLMEASTIAAILLGSVAGGVLADLHVLVALAACALAYAGAVAANIYIPKLAAARPGQSWNVLKMTCSFKSACTSLWQNGETRFSLVGTSLFWGAGVTLRFLLVLWVPVALGITDNATPTYLNAMVAIGIVLGAGAAAKLVTLETVSRCMPAGILIGVVVLFFSLQHELLPAYALLMLIGVLGGFFVVPLNALLQERGKKSVGAGNAIAVQNLGENSAMLLMLGIYSLAVLVGIPVVPIGIGFGTLFALAITALWIWQRRH.

The Periplasmic portion of the chain corresponds to 1 to 17 (MSESVHTNTSLWSKGMK). Residues 18-38 (AVIVAQFLSAFGDNALLFATL) traverse the membrane as a helical segment. Residues 39 to 52 (ALLKAQFYPEWSQP) lie on the Cytoplasmic side of the membrane. The chain crosses the membrane as a helical span at residues 53 to 73 (VLQMVFVGAYILFAPFVGQVA). The Periplasmic portion of the chain corresponds to 74 to 90 (DSFAKGRVMMFANGLKL). A helical transmembrane segment spans residues 91-111 (LGAASICFGFNPFVGYTLVGI). Residues 112–144 (GAAAYSPAKYGILGELTTGDKLVKANGLMEAST) are Cytoplasmic-facing. The chain crosses the membrane as a helical span at residues 145-165 (IAAILLGSVAGGVLADLHVLV). Position 166 (Ala166) is a topological domain, periplasmic. A helical membrane pass occupies residues 167-187 (LAACALAYAGAVAANIYIPKL). The Cytoplasmic segment spans residues 188–226 (AAARPGQSWNVLKMTCSFKSACTSLWQNGETRFSLVGTS). The chain crosses the membrane as a helical span at residues 227-247 (LFWGAGVTLRFLLVLWVPVAL). Topologically, residues 248 to 256 (GITDNATPT) are periplasmic. A helical membrane pass occupies residues 257–277 (YLNAMVAIGIVLGAGAAAKLV). The Cytoplasmic portion of the chain corresponds to 278–280 (TLE). A helical transmembrane segment spans residues 281-301 (TVSRCMPAGILIGVVVLFFSL). The Periplasmic segment spans residues 302-304 (QHE). Residues 305 to 325 (LLPAYALLMLIGVLGGFFVVP) traverse the membrane as a helical segment. The Cytoplasmic portion of the chain corresponds to 326–343 (LNALLQERGKKSVGAGNA). A helical membrane pass occupies residues 344 to 364 (IAVQNLGENSAMLLMLGIYSL). At 365 to 366 (AV) the chain is on the periplasmic side. Residues 367-387 (LVGIPVVPIGIGFGTLFALAI) traverse the membrane as a helical segment. Residues 388-397 (TALWIWQRRH) lie on the Cytoplasmic side of the membrane.

It belongs to the major facilitator superfamily. LplT (TC 2.A.1.42) family.

It localises to the cell inner membrane. Catalyzes the facilitated diffusion of 2-acyl-glycero-3-phosphoethanolamine (2-acyl-GPE) into the cell. The polypeptide is Lysophospholipid transporter LplT (Escherichia fergusonii (strain ATCC 35469 / DSM 13698 / CCUG 18766 / IAM 14443 / JCM 21226 / LMG 7866 / NBRC 102419 / NCTC 12128 / CDC 0568-73)).